Consider the following 399-residue polypeptide: Argininosuccinate synthase (399 aa).

9–17 contributes to the ATP binding site; sequence AYSGGLDTS. An L-citrulline-binding site is contributed by tyrosine 87. Position 117 (glycine 117) interacts with ATP. Positions 119, 123, and 124 each coordinate L-aspartate. Asparagine 123 is a binding site for L-citrulline. L-citrulline is bound by residues arginine 127, serine 176, serine 185, glutamate 261, and tyrosine 273.

It belongs to the argininosuccinate synthase family. Type 1 subfamily. In terms of assembly, homotetramer.

It localises to the cytoplasm. The catalysed reaction is L-citrulline + L-aspartate + ATP = 2-(N(omega)-L-arginino)succinate + AMP + diphosphate + H(+). Its pathway is amino-acid biosynthesis; L-arginine biosynthesis; L-arginine from L-ornithine and carbamoyl phosphate: step 2/3. This is Argininosuccinate synthase from Chlorobium chlorochromatii (strain CaD3).